The chain runs to 218 residues: Protein Syd (218 aa).

This sequence belongs to the Syd family.

Its subcellular location is the cell inner membrane. Functionally, interacts with the SecY protein in vivo. May bind preferentially to an uncomplexed state of SecY, thus functioning either as a chelating agent for excess SecY in the cell or as a regulatory factor that negatively controls the translocase function. The protein is Protein Syd of Shewanella denitrificans (strain OS217 / ATCC BAA-1090 / DSM 15013).